Here is a 133-residue protein sequence, read N- to C-terminus: MTLNLCVLTPNRIVWDSEVKEIILSTNSGQIGVLPNHAPIATAVDIGILRIRLNDQWLTMALMGGFARIGNNEITVLVNDAEKSSDIDPQEAQQTLEIAEAALRKAEGKRQTIEANLALRRARTRVEAINAIS.

Belongs to the ATPase epsilon chain family. As to quaternary structure, F-type ATPases have 2 components, CF(1) - the catalytic core - and CF(0) - the membrane proton channel. CF(1) has five subunits: alpha(3), beta(3), gamma(1), delta(1), epsilon(1). CF(0) has three main subunits: a, b and c.

Its subcellular location is the plastid. It is found in the chloroplast thylakoid membrane. Its function is as follows. Produces ATP from ADP in the presence of a proton gradient across the membrane. This is ATP synthase epsilon chain, chloroplastic from Helianthus annuus (Common sunflower).